Consider the following 314-residue polypeptide: Small ribosomal subunit protein RACK1 (314 aa).

At threonine 10 the chain carries Phosphothreonine. The WD 1 repeat unit spans residues 13-44 (GHSGWVTSLSTAPENPDILLSGSRDKSIILWN). A Phosphoserine modification is found at serine 39. Tyrosine 52 bears the Phosphotyrosine mark. WD repeat units follow at residues 61–91 (GHSH…RLWD), 103–133 (GHTS…KIWN), 146–178 (GHSD…KVWD), 190–220 (GHTG…MLWD), 231–260 (EAKA…RIFD), and 281–311 (SSEP…RVWQ). Serine 148 is subject to Phosphoserine. Phosphoserine is present on residues serine 242 and serine 255.

Belongs to the WD repeat G protein beta family. Ribosomal protein RACK1 subfamily. In terms of assembly, component of the small ribosomal subunit (SSU). Mature yeast ribosomes consist of a small (40S) and a large (60S) subunit. The 40S small subunit contains 1 molecule of ribosomal RNA (18S rRNA) and at least 33 different proteins. The large 60S subunit contains 3 rRNA molecules (25S, 5.8S and 5S rRNA) and at least 46 different proteins. RACK1 is located at the head of the SSU in the vicinity of the mRNA exit channel. RACK1 interacts with the mRNA-binding protein SCP16. RACK1 also exists simultaneously as a homodimer in a cytosolic non-ribosome-bound form. Interacts with pck2. Interacts with pat1/ran1.

It localises to the cytoplasm. The protein resides in the membrane. In terms of biological role, component of the ribosome, a large ribonucleoprotein complex responsible for the synthesis of proteins in the cell. The small ribosomal subunit (SSU) binds messenger RNAs (mRNAs) and translates the encoded message by selecting cognate aminoacyl-transfer RNA (tRNA) molecules. The large subunit (LSU) contains the ribosomal catalytic site termed the peptidyl transferase center (PTC), which catalyzes the formation of peptide bonds, thereby polymerizing the amino acids delivered by tRNAs into a polypeptide chain. The nascent polypeptides leave the ribosome through a tunnel in the LSU and interact with protein factors that function in enzymatic processing, targeting, and the membrane insertion of nascent chains at the exit of the ribosomal tunnel. Located at the head of the 40S ribosomal subunit in the vicinity of the mRNA exit channel, RACK1 serves as a scaffold protein that can recruit other proteins to the ribosome. Involved in induction of the ribosome quality control (RQC) pathway; a pathway that degrades nascent peptide chains during problematic translation. Involved in the negative regulation of translation of a specific subset of proteins. May be a receptor for protein kinase C in the regulation of actin cytoskeleton organization during cell wall synthesis and morphogenesis. Involved in the control of G2/M transition. May function as an anchoring protein for pat1/ran1 kinase. Negatively regulates the cell integrity transduction pathway by favoring translation of the tyrosine-phosphatases pyp1 and pyp2 that deactivate pmk1. Positively regulates the synthesis of the stress-responsive transcription factor Atf1 and the cytoplasmic catalase, a detoxificant enzyme induced by treatment with hydrogen peroxide. This chain is Small ribosomal subunit protein RACK1, found in Schizosaccharomyces pombe (strain 972 / ATCC 24843) (Fission yeast).